The following is a 554-amino-acid chain: MLO-like protein 14 (554 aa).

Over 1-13 (MREETEPSERTLG) the chain is Extracellular. A helical membrane pass occupies residues 14 to 34 (LTPTWSVATVLTIFVFVSLIV). Residues 35 to 63 (ERSIHRLSNWLQKTKRKPLFAALEKMKEE) are Cytoplasmic-facing. The helical transmembrane segment at 64 to 84 (LMLLGFISLLLTATSSTIANI) threads the bilayer. The Extracellular segment spans residues 85–158 (CVSSSFHNDR…SYEGMEQLHR (74 aa)). Residues 159-179 (FIFIMAVTHVTYSCLTMLLAI) traverse the membrane as a helical segment. At 180-281 (VKIHRWRIWE…MIRSMEEEFQ (102 aa)) the chain is on the cytoplasmic side. Residues 282–302 (KIVGVSGPLWGFVVGFMLFNI) form a helical membrane-spanning segment. Lys-303 is a topological domain (extracellular). The helical transmembrane segment at 304–324 (GSNLYFWLAIIPITLVLLVGA) threads the bilayer. The Cytoplasmic segment spans residues 325-366 (KLQHVIATLALENASITEYASGIKLRPRDELFWFKKPELLLS). A helical transmembrane segment spans residues 367–387 (LIHFIQFQNAFELASFFWFWW). Residues 388-406 (QFGYNSCFLRNHLLVYLRL) lie on the Extracellular side of the membrane. Residues 407–427 (ILGFSGQFLCSYSTLPLYALV) form a helical membrane-spanning segment. The Cytoplasmic portion of the chain corresponds to 428–554 (TQMGTNYKAA…SSSLPMRREC (127 aa)). Residues 441–462 (QRVRETINGWGKATRRKRRHGL) are calmodulin-binding.

This sequence belongs to the MLO family.

Its subcellular location is the membrane. May be involved in modulation of pathogen defense and leaf cell death. Activity seems to be regulated by Ca(2+)-dependent calmodulin binding and seems not to require heterotrimeric G proteins. The chain is MLO-like protein 14 (MLO14) from Arabidopsis thaliana (Mouse-ear cress).